A 726-amino-acid polypeptide reads, in one-letter code: Dipeptidyl-peptidase 5 (726 aa).

A signal peptide spans 1–19 (MAAAKWLIASLAFASSGLA). Asn96 and Asn252 each carry an N-linked (GlcNAc...) asparagine glycan. The interval 269 to 291 (AEPINKRNGPRTPQGIEGASSSP) is disordered. Ser558 (charge relay system) is an active-site residue. N-linked (GlcNAc...) asparagine glycans are attached at residues Asn605 and Asn638. Residues Asp641 and His673 each act as charge relay system in the active site. An N-linked (GlcNAc...) asparagine glycan is attached at Asn699.

The protein belongs to the peptidase S9C family.

It is found in the secreted. The protein is Dipeptidyl-peptidase 5 (DPPV) of Trichophyton schoenleinii.